The sequence spans 127 residues: Large ribosomal subunit protein bL12 (127 aa).

The protein belongs to the bacterial ribosomal protein bL12 family. Homodimer. Part of the ribosomal stalk of the 50S ribosomal subunit. Forms a multimeric L10(L12)X complex, where L10 forms an elongated spine to which 2 to 4 L12 dimers bind in a sequential fashion. Binds GTP-bound translation factors.

In terms of biological role, forms part of the ribosomal stalk which helps the ribosome interact with GTP-bound translation factors. Is thus essential for accurate translation. The polypeptide is Large ribosomal subunit protein bL12 (Pelobacter propionicus (strain DSM 2379 / NBRC 103807 / OttBd1)).